The primary structure comprises 613 residues: Coiled-coil domain-containing protein 116 (613 aa).

Positions 41-68 (KPGRVPHPPSTCGSSALQGQRRNKRHPQ) are disordered. Positions 51-60 (TCGSSALQGQ) are enriched in polar residues. Residues 79–104 (ESQVLDSLETVVEKATERMAAMKTEA) adopt a coiled-coil conformation. Disordered regions lie at residues 329-395 (CRDG…AQVA), 509-541 (RQAS…QATE), and 565-613 (MSAC…EDGV). Ser-386 is modified (phosphoserine). Polar residues predominate over residues 512–539 (SRLSTSHCSTETPSVQQEPATHTAQDQA). Residues 577–589 (KSKDMDNEGRDKA) are compositionally biased toward basic and acidic residues. Residues 590-613 (EIEDEDEDEFKDEDQDEDKDEDGV) show a composition bias toward acidic residues.

The protein localises to the cytoplasm. The protein resides in the cytoskeleton. It is found in the microtubule organizing center. Its subcellular location is the centrosome. The chain is Coiled-coil domain-containing protein 116 (CCDC116) from Homo sapiens (Human).